The primary structure comprises 83 residues: Exodeoxyribonuclease 7 small subunit (83 aa).

It belongs to the XseB family. As to quaternary structure, heterooligomer composed of large and small subunits.

It is found in the cytoplasm. The enzyme catalyses Exonucleolytic cleavage in either 5'- to 3'- or 3'- to 5'-direction to yield nucleoside 5'-phosphates.. Its function is as follows. Bidirectionally degrades single-stranded DNA into large acid-insoluble oligonucleotides, which are then degraded further into small acid-soluble oligonucleotides. In Nitrobacter hamburgensis (strain DSM 10229 / NCIMB 13809 / X14), this protein is Exodeoxyribonuclease 7 small subunit.